Here is a 307-residue protein sequence, read N- to C-terminus: tRNA pseudouridine synthase B (307 aa).

The Nucleophile role is filled by Asp38.

This sequence belongs to the pseudouridine synthase TruB family. Type 1 subfamily.

It catalyses the reaction uridine(55) in tRNA = pseudouridine(55) in tRNA. Functionally, responsible for synthesis of pseudouridine from uracil-55 in the psi GC loop of transfer RNAs. This Bacillus cereus (strain ZK / E33L) protein is tRNA pseudouridine synthase B.